The sequence spans 51 residues: Large ribosomal subunit protein eL40 (51 aa).

Belongs to the eukaryotic ribosomal protein eL40 family.

This Thermococcus gammatolerans (strain DSM 15229 / JCM 11827 / EJ3) protein is Large ribosomal subunit protein eL40.